Here is a 345-residue protein sequence, read N- to C-terminus: Myb/SANT-like DNA-binding domain-containing protein 4 (345 aa).

Residues 4–77 (LKRKRKSNFS…EVKRRYLDWR (74 aa)) enclose the Myb-like domain. A Glycyl lysine isopeptide (Lys-Gly) (interchain with G-Cter in SUMO2) cross-link involves residue Lys-9. Ser-106 is modified (phosphoserine). Glycyl lysine isopeptide (Lys-Gly) (interchain with G-Cter in SUMO2) cross-links involve residues Lys-114 and Lys-142. Residues 139–175 (TEVKVEEEERDPQSPEFEIEEEEEMLSSVIPDSRREN) form a disordered region. Thr-188 bears the Phosphothreonine mark. Positions 202-344 (HLLMNIEKQK…RLRIQKEGHL (143 aa)) form a coiled coil. Residues Lys-237, Lys-254, and Lys-273 each participate in a glycyl lysine isopeptide (Lys-Gly) (interchain with G-Cter in SUMO2) cross-link.

This chain is Myb/SANT-like DNA-binding domain-containing protein 4 (Msantd4), found in Mus musculus (Mouse).